The primary structure comprises 292 residues: 4-hydroxy-tetrahydrodipicolinate synthase (292 aa).

Thr-45 is a binding site for pyruvate. The active-site Proton donor/acceptor is Tyr-133. Lys-161 acts as the Schiff-base intermediate with substrate in catalysis. Ile-203 contacts pyruvate.

It belongs to the DapA family. In terms of assembly, homodimer.

It localises to the cytoplasm. The enzyme catalyses L-aspartate 4-semialdehyde + pyruvate = (2S,4S)-4-hydroxy-2,3,4,5-tetrahydrodipicolinate + H2O + H(+). The protein operates within amino-acid biosynthesis; L-lysine biosynthesis via DAP pathway; (S)-tetrahydrodipicolinate from L-aspartate: step 3/4. In terms of biological role, catalyzes the condensation of (S)-aspartate-beta-semialdehyde [(S)-ASA] and pyruvate to 4-hydroxy-tetrahydrodipicolinate (HTPA). This is 4-hydroxy-tetrahydrodipicolinate synthase from Pseudomonas aeruginosa (strain ATCC 15692 / DSM 22644 / CIP 104116 / JCM 14847 / LMG 12228 / 1C / PRS 101 / PAO1).